A 156-amino-acid chain; its full sequence is Small ribosomal subunit protein uS7 (156 aa).

Belongs to the universal ribosomal protein uS7 family. In terms of assembly, part of the 30S ribosomal subunit. Contacts proteins S9 and S11.

Its function is as follows. One of the primary rRNA binding proteins, it binds directly to 16S rRNA where it nucleates assembly of the head domain of the 30S subunit. Is located at the subunit interface close to the decoding center, probably blocks exit of the E-site tRNA. The protein is Small ribosomal subunit protein uS7 of Trichlorobacter lovleyi (strain ATCC BAA-1151 / DSM 17278 / SZ) (Geobacter lovleyi).